The sequence spans 163 residues: UPF0260 protein GOX1406 (163 aa).

It belongs to the UPF0260 family.

The chain is UPF0260 protein GOX1406 from Gluconobacter oxydans (strain 621H) (Gluconobacter suboxydans).